Reading from the N-terminus, the 383-residue chain is Succinyl-diaminopimelate desuccinylase (383 aa).

H73 provides a ligand contact to Zn(2+). D75 is a catalytic residue. D107 lines the Zn(2+) pocket. E141 (proton acceptor) is an active-site residue. Residues E142, E170, and H356 each coordinate Zn(2+).

The protein belongs to the peptidase M20A family. DapE subfamily. In terms of assembly, homodimer. Zn(2+) is required as a cofactor. It depends on Co(2+) as a cofactor.

It catalyses the reaction N-succinyl-(2S,6S)-2,6-diaminopimelate + H2O = (2S,6S)-2,6-diaminopimelate + succinate. The protein operates within amino-acid biosynthesis; L-lysine biosynthesis via DAP pathway; LL-2,6-diaminopimelate from (S)-tetrahydrodipicolinate (succinylase route): step 3/3. Its function is as follows. Catalyzes the hydrolysis of N-succinyl-L,L-diaminopimelic acid (SDAP), forming succinate and LL-2,6-diaminopimelate (DAP), an intermediate involved in the bacterial biosynthesis of lysine and meso-diaminopimelic acid, an essential component of bacterial cell walls. The chain is Succinyl-diaminopimelate desuccinylase from Pseudomonas aeruginosa (strain ATCC 15692 / DSM 22644 / CIP 104116 / JCM 14847 / LMG 12228 / 1C / PRS 101 / PAO1).